A 396-amino-acid chain; its full sequence is S-adenosylmethionine synthase (396 aa).

H16 provides a ligand contact to ATP. D18 contributes to the Mg(2+) binding site. E44 is a K(+) binding site. Residues E57 and Q100 each contribute to the L-methionine site. The interval 100–110 (QSPDIAQGVNE) is flexible loop. ATP-binding positions include 175–177 (DAK), 242–243 (RF), D251, 257–258 (RK), A274, and K278. D251 is a binding site for L-methionine. An L-methionine-binding site is contributed by K282.

It belongs to the AdoMet synthase family. Homotetramer; dimer of dimers. The cofactor is Mg(2+). K(+) serves as cofactor.

The protein resides in the cytoplasm. It catalyses the reaction L-methionine + ATP + H2O = S-adenosyl-L-methionine + phosphate + diphosphate. Its pathway is amino-acid biosynthesis; S-adenosyl-L-methionine biosynthesis; S-adenosyl-L-methionine from L-methionine: step 1/1. In terms of biological role, catalyzes the formation of S-adenosylmethionine (AdoMet) from methionine and ATP. The overall synthetic reaction is composed of two sequential steps, AdoMet formation and the subsequent tripolyphosphate hydrolysis which occurs prior to release of AdoMet from the enzyme. This is S-adenosylmethionine synthase from Streptococcus suis (strain 05ZYH33).